Consider the following 249-residue polypeptide: Uridylate kinase (249 aa).

15-18 (KLSG) serves as a coordination point for ATP. An involved in allosteric activation by GTP region spans residues 23 to 28 (GDEGFG). A UMP-binding site is contributed by Gly-57. The ATP site is built by Gly-58 and Arg-62. Residues Asp-77 and 138–145 (TGNPFFTT) each bind UMP. ATP-binding residues include Thr-165, Tyr-171, and Asp-174.

This sequence belongs to the UMP kinase family. In terms of assembly, homohexamer.

It localises to the cytoplasm. It carries out the reaction UMP + ATP = UDP + ADP. It functions in the pathway pyrimidine metabolism; CTP biosynthesis via de novo pathway; UDP from UMP (UMPK route): step 1/1. With respect to regulation, allosterically activated by GTP. Inhibited by UTP. In terms of biological role, catalyzes the reversible phosphorylation of UMP to UDP. This chain is Uridylate kinase, found in Pseudoalteromonas translucida (strain TAC 125).